Here is a 308-residue protein sequence, read N- to C-terminus: uncharacterized protein (308 aa).

A compositionally biased stretch (polar residues) spans 43–55 (SQYGTWADQHQNG). A disordered region spans residues 43 to 289 (SQYGTWADQH…KEERSEECSP (247 aa)). A Phosphoserine modification is found at serine 62. Residues 80 to 90 (HLSSYTESTSV) are compositionally biased toward polar residues. A compositionally biased stretch (basic and acidic residues) spans 91-109 (EQRDSSRDRRSSSVDRSSS). The segment covering 136–152 (IHQTSVLDSSALKTRVQ) has biased composition (polar residues). Residues 153-168 (LSKRSRRRAPISHSLR) are compositionally biased toward basic residues. Position 166 is a phosphoserine (serine 166). Basic and acidic residues-rich tracts occupy residues 175 to 186 (SESRSPLEEESH) and 193 to 216 (DSTEEKSPRRDESDEEPPRVERTP). Phosphoserine occurs at positions 205, 259, 262, and 288.

This is an uncharacterized protein from Mus musculus (Mouse).